The primary structure comprises 519 residues: MRRLGHHRLHGKTGGVGTKGMVAKLSIGVIVLLICTLSLLFSANIGSNREPTRPSKINVEELWESAKSGGWRPSSAPRSDWPPPTKETNGYLRVRCNGGLNQQRSAICNAVLAARIMNATLVLPELDANSFWHDDSGFQGIYDVEHFIETLKYDVKIVGKIPDVHKNGKTKKIKAFQIRPPRDAPIEWYLTTALKAMREHSAIYLTPFSHRLAEEIDNPEYQRLRCRVNYHALRFKPHIMKLSESIVDKLRSQGHFMSIHLRFEMDMLAFAGCFDIFNPEEQKILRKYRKENFADKRLIYNERRAIGKCPLTPEEVGLILRAMRFDNSTRIYLAAGELFGGEQFMKPFRTLFPRLDNHSSVDPSEELSATSQGLIGSAVDYMVCLLSDIFMPTYDGPSNFANNLLGHRLYYGFRTTIRPDRKALAPIFIAREKGKRAGFEEAVRRVMLKTNFGGPHKRVSPESFYTNSWPECFCQMNPKKSSDKCPPNNVIEILDSRLESIRDPDSTSQTNSTVTGLER.

The Cytoplasmic segment spans residues 1–24 (MRRLGHHRLHGKTGGVGTKGMVAK). A helical; Signal-anchor for type II membrane protein membrane pass occupies residues 25 to 45 (LSIGVIVLLICTLSLLFSANI). Topologically, residues 46–519 (GSNREPTRPS…TNSTVTGLER (474 aa)) are lumenal. Residues 67–86 (KSGGWRPSSAPRSDWPPPTK) form a disordered region. Asn118 carries N-linked (GlcNAc...) asparagine glycosylation. Residue 260-262 (HLR) coordinates substrate. Asn327, Asn357, and Asn511 each carry an N-linked (GlcNAc...) asparagine glycan. The segment at 497 to 519 (RLESIRDPDSTSQTNSTVTGLER) is disordered. Residues 506 to 519 (STSQTNSTVTGLER) are compositionally biased toward polar residues.

Belongs to the glycosyltransferase GT106 family.

The protein resides in the golgi apparatus membrane. It functions in the pathway glycan metabolism. The polypeptide is O-fucosyltransferase 1 (Arabidopsis thaliana (Mouse-ear cress)).